The primary structure comprises 310 residues: Ribosomal RNA small subunit methyltransferase H (310 aa).

S-adenosyl-L-methionine is bound by residues 33–35 (AGH), D53, F79, D100, and Q107.

This sequence belongs to the methyltransferase superfamily. RsmH family.

It localises to the cytoplasm. The catalysed reaction is cytidine(1402) in 16S rRNA + S-adenosyl-L-methionine = N(4)-methylcytidine(1402) in 16S rRNA + S-adenosyl-L-homocysteine + H(+). Its function is as follows. Specifically methylates the N4 position of cytidine in position 1402 (C1402) of 16S rRNA. This chain is Ribosomal RNA small subunit methyltransferase H, found in Clostridium botulinum (strain Alaska E43 / Type E3).